Reading from the N-terminus, the 921-residue chain is Glutamate receptor 3.7 (921 aa).

Residues methionine 1–cysteine 25 form the signal peptide. The Extracellular portion of the chain corresponds to glutamine 26 to arginine 580. Asparagine 214, asparagine 300, asparagine 330, asparagine 369, asparagine 396, asparagine 478, and asparagine 568 each carry an N-linked (GlcNAc...) asparagine glycan. The chain crosses the membrane as a helical span at residues leucine 581–histidine 601. Topologically, residues arginine 602–arginine 608 are cytoplasmic. Residues glycine 609 to arginine 629 form a helical membrane-spanning segment. Topologically, residues asparagine 630–arginine 640 are cytoplasmic. Residues leucine 641 to leucine 661 form a helical membrane-spanning segment. Over threonine 662–serine 822 the chain is Extracellular. Residues phenylalanine 823–leucine 843 traverse the membrane as a helical segment. At arginine 844 to asparagine 921 the chain is on the cytoplasmic side. A disordered region spans residues phenylalanine 896–asparagine 921.

Belongs to the glutamate-gated ion channel (TC 1.A.10.1) family. In terms of assembly, may form heteromers. In terms of tissue distribution, expressed predominantly in leaves and siliques. Also detected in roots.

It localises to the membrane. Glutamate-gated receptor that probably acts as a non-selective cation channel. May be involved in light-signal transduction and calcium homeostasis via the regulation of calcium influx into cells. In Arabidopsis thaliana (Mouse-ear cress), this protein is Glutamate receptor 3.7 (GLR3.7).